The chain runs to 621 residues: UvrABC system protein C (621 aa).

In terms of domain architecture, GIY-YIG spans 11 to 90; the sequence is TTPGVYLYKD…IKKHRPRYNI (80 aa). The 36-residue stretch at 200–235 folds into the UVR domain; sequence KELVELLQKDMLYASEALEFEKAATLRDQIQAIKHT.

Belongs to the UvrC family. Interacts with UvrB in an incision complex.

Its subcellular location is the cytoplasm. The UvrABC repair system catalyzes the recognition and processing of DNA lesions. UvrC both incises the 5' and 3' sides of the lesion. The N-terminal half is responsible for the 3' incision and the C-terminal half is responsible for the 5' incision. The sequence is that of UvrABC system protein C from Lawsonia intracellularis (strain PHE/MN1-00).